We begin with the raw amino-acid sequence, 367 residues long: Uracil nucleotide/cysteinyl leukotriene receptor (367 aa).

Positions 1 to 28 (MSKRSWWAGSRKPPREMLKLSGSDSSQS) are disordered. Topologically, residues 1 to 64 (MSKRSWWAGS…TPLENMLFAS (64 aa)) are extracellular. An N-linked (GlcNAc...) asparagine glycan is attached at N42. A helical membrane pass occupies residues 65–85 (FYLLDFILALVGNTLALWLFI). Topologically, residues 86-92 (RDHKSGT) are cytoplasmic. A helical membrane pass occupies residues 93-113 (PANVFLMHLAVADLSCVLVLP). The Extracellular portion of the chain corresponds to 114–133 (TRLVYHFSGNHWPFGEIACR). The cysteines at positions 132 and 209 are disulfide-linked. A helical transmembrane segment spans residues 134 to 154 (LTGFLFYLNMYASIYFLTCIS). Residues 155–175 (ADRFLAIVHPVKSLKLRRPLY) lie on the Cytoplasmic side of the membrane. The chain crosses the membrane as a helical span at residues 176–196 (AHLACAFLWVVVAVAMAPLLV). The Extracellular segment spans residues 197 to 223 (SPQTVQTNHTVVCLQLYREKASHHALV). N204 carries N-linked (GlcNAc...) asparagine glycosylation. The helical transmembrane segment at 224–244 (SLAVAFTFPFITTVTCYLLII) threads the bilayer. Residues 245 to 260 (RSLRQGLRVEKRLKTK) lie on the Cytoplasmic side of the membrane. Residues 261 to 281 (AVRMIAIVLAIFLVCFVPYHV) traverse the membrane as a helical segment. N-linked (GlcNAc...) asparagine glycosylation is present at N282. Residues 282 to 308 (NRSVYVLHYRSHGASCATQRILALANR) are Extracellular-facing. Residues 309-329 (ITSCLTSLNGALDPIMYFFVA) traverse the membrane as a helical segment. The Cytoplasmic segment spans residues 330–367 (EKFRHALCNLLCGKRLKGPPPSFEGKTNESSLSAKSEL).

The protein belongs to the G-protein coupled receptor 1 family. Expressed in brain, kidney, heart and umbilical vein endothelial cells. Highest level in brain.

The protein resides in the cell membrane. In terms of biological role, dual specificity receptor for uracil nucleotides and cysteinyl leukotrienes (CysLTs). Signals through G(i) and inhibition of adenylyl cyclase. May mediate brain damage by nucleotides and CysLTs following ischemia. The sequence is that of Uracil nucleotide/cysteinyl leukotriene receptor (GPR17) from Homo sapiens (Human).